Here is a 100-residue protein sequence, read N- to C-terminus: Co-chaperonin GroES (100 aa).

It belongs to the GroES chaperonin family. Heptamer of 7 subunits arranged in a ring. Interacts with the chaperonin GroEL.

It localises to the cytoplasm. In terms of biological role, together with the chaperonin GroEL, plays an essential role in assisting protein folding. The GroEL-GroES system forms a nano-cage that allows encapsulation of the non-native substrate proteins and provides a physical environment optimized to promote and accelerate protein folding. GroES binds to the apical surface of the GroEL ring, thereby capping the opening of the GroEL channel. The polypeptide is Co-chaperonin GroES (Mycobacterium tuberculosis (strain CDC 1551 / Oshkosh)).